Consider the following 526-residue polypeptide: Peptide chain release factor 3 (526 aa).

The tr-type G domain occupies 9–277 (DKRRTFAIIS…GIVEWAPKPL (269 aa)). GTP-binding positions include 18 to 25 (SHPDAGKT), 86 to 90 (DTPGH), and 140 to 143 (NKLD).

The protein belongs to the TRAFAC class translation factor GTPase superfamily. Classic translation factor GTPase family. PrfC subfamily.

Its subcellular location is the cytoplasm. Its function is as follows. Increases the formation of ribosomal termination complexes and stimulates activities of RF-1 and RF-2. It binds guanine nucleotides and has strong preference for UGA stop codons. It may interact directly with the ribosome. The stimulation of RF-1 and RF-2 is significantly reduced by GTP and GDP, but not by GMP. The chain is Peptide chain release factor 3 from Shewanella baltica (strain OS223).